We begin with the raw amino-acid sequence, 349 residues long: Core protein VP7 (349 aa).

The N-linked (GlcNAc...) asparagine; by host glycan is linked to asparagine 45.

It belongs to the orbivirus VP7 family. As to quaternary structure, homotrimer.

It is found in the virion. In terms of biological role, major structural core protein; binds to structural protein VP3. Constitutes the surface of the AHSV core. In Camelus dromedarius (Dromedary), this protein is Core protein VP7 (Segment-7).